The sequence spans 61 residues: Large ribosomal subunit protein uL30 (61 aa).

The protein belongs to the universal ribosomal protein uL30 family. Part of the 50S ribosomal subunit.

The polypeptide is Large ribosomal subunit protein uL30 (Bordetella parapertussis (strain 12822 / ATCC BAA-587 / NCTC 13253)).